A 183-amino-acid chain; its full sequence is Ribosome rescue factor SmrB (183 aa).

A Smr domain is found at 98 to 173 (LDLHGLTQLQ…GDAALLVLIE (76 aa)).

This sequence belongs to the SmrB family. As to quaternary structure, associates with collided ribosomes, but not with correctly translating polysomes.

In terms of biological role, acts as a ribosome collision sensor. Detects stalled/collided disomes (pairs of ribosomes where the leading ribosome is stalled and a second ribosome has collided with it) and endonucleolytically cleaves mRNA at the 5' boundary of the stalled ribosome. Stalled/collided disomes form a new interface (primarily via the 30S subunits) that binds SmrB. Cleaved mRNA becomes available for tmRNA ligation, leading to ribosomal subunit dissociation and rescue of stalled ribosomes. This is Ribosome rescue factor SmrB from Escherichia coli O17:K52:H18 (strain UMN026 / ExPEC).